The sequence spans 36 residues: GPKTKAACKMACKLATCGKKPGGWKCKLCELGCDAV.

Intrachain disulfides connect cysteine 8–cysteine 33, cysteine 12–cysteine 29, and cysteine 17–cysteine 26. Methionine 10 carries the post-translational modification Methionine sulfoxide. Valine 36 carries the valine amide modification.

It localises to the secreted. Has antimicrobial activity against Gram-positive bacteria (C.glutamicum ATCC 13032 (MIC=0.4 uM), B.subtilis ATCC 23857 (MIC=0.4 uM) and S.aureus ATCC 9144 (MIC=6.3 uM)) and Gram-negative bacteria (E.coli ATCC 25922 (MIC=0.8 uM) and P.aeruginosa ATCC 27853 (MIC=1.6 uM)). The chain is Turgencin-A from Synoicum turgens (Colonial ascidian).